A 249-amino-acid polypeptide reads, in one-letter code: Ribosomal RNA small subunit methyltransferase G (249 aa).

S-adenosyl-L-methionine-binding positions include G88, F93, 111–113 (DAT), 139–140 (AE), and R158.

This sequence belongs to the methyltransferase superfamily. RNA methyltransferase RsmG family.

It is found in the cytoplasm. Its function is as follows. Specifically methylates the N7 position of a guanine in 16S rRNA. This Thermus thermophilus (strain ATCC BAA-163 / DSM 7039 / HB27) protein is Ribosomal RNA small subunit methyltransferase G.